Reading from the N-terminus, the 475-residue chain is Ammonium transporter Rh type C (475 aa).

The Cytoplasmic portion of the chain corresponds to 1-20 (MGCVQSFRNFCDRPKNTNVR). Residues 21–41 (ISLPAVCFVWQIAMIILFGVF) form a helical membrane-spanning segment. Over 42-73 (IRYNEEADTHWVEYRKKENISSDIENDFYFRY) the chain is Extracellular. N-linked (GlcNAc...) asparagine glycosylation occurs at Asn60. Residues 74 to 94 (PSFQDVHVMIFVGFGFLMTFL) traverse the membrane as a helical segment. Residues 95-98 (KRYS) are Cytoplasmic-facing. Residues 99-119 (FGAVGFNFLIAAFGLQWALLM) form a helical membrane-spanning segment. At 120–138 (QGWFHSLDYTDGKIKIGIE) the chain is on the extracellular side. Residues 139–159 (NLINADFCVAGCLIAYGAVLG) traverse the membrane as a helical segment. At 160–167 (KVSPVQLM) the chain is on the cytoplasmic side. A helical transmembrane segment spans residues 168–188 (VLTLFGITLFAVEEYIILNLI). Residues 189–193 (HARDA) are Extracellular-facing. A helical transmembrane segment spans residues 194–214 (GGSMVIHTFGGYYGLSISWML). The Cytoplasmic segment spans residues 215–233 (YRPNLEQSSNLQGSVYQSD). The chain crosses the membrane as a helical span at residues 234-254 (VFAMIGTLFLWMFWPSFNSAI). At 255–265 (TDHGDGQHRAA) the chain is on the extracellular side. A helical membrane pass occupies residues 266-286 (INTYLALASTVLTTVAISSLF). At 287-299 (QKHGKLDMVHIQN) the chain is on the cytoplasmic side. The chain crosses the membrane as a helical span at residues 300–320 (STLAGGVAVGTAAEFMLMPYG). Ser321 is a topological domain (extracellular). A helical transmembrane segment spans residues 322 to 342 (LIVGFCCGIISTLGYIYLTPF). At 343 to 357 (MEKYLKIQDTCGIHN) the chain is on the cytoplasmic side. A helical membrane pass occupies residues 358–378 (LHAMPGLIGGIVGAITAAAAT). Residues 379 to 410 (ESVYGKEGLVNTFDFVGPFKNMVPTTQGGHQA) lie on the Extracellular side of the membrane. The helical transmembrane segment at 411-431 (AGLCVAICFGIGGGIMVGCIL) threads the bilayer. At 432–475 (RLPIWCDPADDNCFNDEPYWELPEEEEIIPPILHYNNHMVNKDV) the chain is on the cytoplasmic side.

The protein belongs to the ammonium transporter (TC 2.A.49) family. Rh subfamily. Homotrimer.

It localises to the apical cell membrane. Functionally, functions as an ammonia transporter. May play a role in the elimination of ammonia in the gill. The protein is Ammonium transporter Rh type C (rhcg) of Tetraodon nigroviridis (Spotted green pufferfish).